The following is a 326-amino-acid chain: Cyclin-dependent kinase 6 (326 aa).

M1 bears the N-acetylmethionine mark. Y13 and Y24 each carry phosphotyrosine. In terms of domain architecture, Protein kinase spans 13–300; it reads YECVAEIGEG…AYGALNHPYF (288 aa). Residues 19–27 and K43 contribute to the ATP site; that span reads IGEGAYGKV. Phosphothreonine is present on residues T49 and T70. The Proton acceptor role is filled by D145. The residue at position 177 (T177) is a Phosphothreonine. Residue K264 is modified to N6-acetyllysine. A Phosphoserine modification is found at S319. A Phosphothreonine modification is found at T325.

The protein belongs to the protein kinase superfamily. CMGC Ser/Thr protein kinase family. CDC2/CDKX subfamily. As to quaternary structure, interaction with D-type G1 cyclins. Cyclin binding promotes enzyme activation by phosphorylation at Thr-177. Binds to RUNX1, CDKN2D, FBXO7 and CDKN2C/p18-INK4c. Forms a cytoplasmic complex with Hsp90/HSP90AB1 and CDC37. FBXO7-binding promotes D-type cyclin binding. In terms of processing, thr-177 phosphorylation and Tyr-24 dephosphorylation promotes kinase activity. As to expression, expressed in subgranular zone (SGZ) of the hippocampal dentate gyrus (DG) and the subventricular zone (SVZ) of the lateral ventricles whose neural precursor cells (NPC) give rise to dentate granule neurons and olfactory bulb (OB) interneurons, respectively. Expressed in the neuroepithelium of the cerebral cortex of the developing brain.

The protein localises to the cytoplasm. It localises to the nucleus. It is found in the cell projection. The protein resides in the ruffle. Its subcellular location is the cytoskeleton. The protein localises to the microtubule organizing center. It localises to the centrosome. The enzyme catalyses L-seryl-[protein] + ATP = O-phospho-L-seryl-[protein] + ADP + H(+). It carries out the reaction L-threonyl-[protein] + ATP = O-phospho-L-threonyl-[protein] + ADP + H(+). With respect to regulation, activated by Thr-177 phosphorylation and Tyr-24 dephosphorylation. Rapidly down-regulated prior to cell differentiation (e.g. erythroid and osteoblast). Functionally, serine/threonine-protein kinase involved in the control of the cell cycle and differentiation; promotes G1/S transition. Phosphorylates pRB/RB1 and NPM1. Interacts with D-type G1 cyclins during interphase at G1 to form a pRB/RB1 kinase and controls the entrance into the cell cycle. Involved in initiation and maintenance of cell cycle exit during cell differentiation; prevents cell proliferation and negatively regulates cell differentiation, but is required for the proliferation of specific cell types (e.g. erythroid and hematopoietic cells). Essential for cell proliferation within the dentate gyrus of the hippocampus and the subventricular zone of the lateral ventricles. Required during thymocyte development. Promotes the production of newborn neurons, probably by modulating G1 length. Promotes, at least in astrocytes, changes in patterns of gene expression, changes in the actin cytoskeleton including loss of stress fibers, and enhanced motility during cell differentiation. Prevents myeloid differentiation by interfering with RUNX1 and reducing its transcription transactivation activity, but promotes proliferation of normal myeloid progenitors. Delays senescence. Promotes the proliferation of beta-cells in pancreatic islets of Langerhans. May play a role in the centrosome organization during the cell cycle phases. The polypeptide is Cyclin-dependent kinase 6 (Cdk6) (Mus musculus (Mouse)).